The following is a 458-amino-acid chain: Monomethylamine methyltransferase MtmB3 (458 aa).

Residue pyrrolysine 202 is a non-standard amino acid, pyrrolysine.

It belongs to the monomethylamine methyltransferase family.

The catalysed reaction is Co(I)-[methylamine-specific corrinoid protein] + methylamine + H(+) = methyl-Co(III)-[methylamine-specific corrinoid protein] + NH4(+). Its pathway is one-carbon metabolism; methanogenesis from methylamine. Its function is as follows. Catalyzes the transfer of the methyl group from monomethylamine to the corrinoid cofactor of MtmC. This is Monomethylamine methyltransferase MtmB3 (mtmB3) from Methanosarcina barkeri (strain Fusaro / DSM 804).